Reading from the N-terminus, the 56-residue chain is uncharacterized protein (56 aa).

A helical transmembrane segment spans residues 6-26; the sequence is MLLIMLYMVLVVNDLILYNIL.

The protein localises to the membrane. This is an uncharacterized protein from Dictyostelium discoideum (Social amoeba).